The primary structure comprises 287 residues: 3-beta-hydroxysteroid sulfotransferase (287 aa).

3'-phosphoadenylyl sulfate is bound at residue 44–49 (KSGTNW). 2 residues coordinate substrate: tryptophan 72 and tryptophan 77. Residue histidine 99 is the Proton acceptor of the active site. 3'-phosphoadenylyl sulfate-binding positions include arginine 121, serine 129, tyrosine 184, 218–223 (SSFKFM), and 247–249 (RKG).

This sequence belongs to the sulfotransferase 1 family. Homodimer. Liver, intestine and kidney.

It localises to the cytoplasm. It carries out the reaction an alcohol + 3'-phosphoadenylyl sulfate = an alkyl sulfate + adenosine 3',5'-bisphosphate + H(+). Its function is as follows. Sulfotransferase that utilizes 3'-phospho-5'-adenylyl sulfate (PAPS) as sulfonate donor to catalyze the sulfonation of 3-beta-hydroxyl groups of neutral steroids. High preference for C21 steroid (pregnenolone). The polypeptide is 3-beta-hydroxysteroid sulfotransferase (STD2) (Cavia porcellus (Guinea pig)).